The chain runs to 72 residues: Translation initiation factor IF-1 (72 aa).

The S1-like domain occupies Met1–Lys72.

It belongs to the IF-1 family. As to quaternary structure, component of the 30S ribosomal translation pre-initiation complex which assembles on the 30S ribosome in the order IF-2 and IF-3, IF-1 and N-formylmethionyl-tRNA(fMet); mRNA recruitment can occur at any time during PIC assembly.

Its subcellular location is the cytoplasm. One of the essential components for the initiation of protein synthesis. Stabilizes the binding of IF-2 and IF-3 on the 30S subunit to which N-formylmethionyl-tRNA(fMet) subsequently binds. Helps modulate mRNA selection, yielding the 30S pre-initiation complex (PIC). Upon addition of the 50S ribosomal subunit IF-1, IF-2 and IF-3 are released leaving the mature 70S translation initiation complex. The chain is Translation initiation factor IF-1 from Parabacteroides distasonis (strain ATCC 8503 / DSM 20701 / CIP 104284 / JCM 5825 / NCTC 11152).